The sequence spans 347 residues: ATP-dependent kinase YFH7 (347 aa).

ATP is bound at residue 33–41 (GPPGSGKST).

It belongs to the YFH7 family.

In terms of biological role, ATP-dependent kinase that could be involved in endoplasmic reticulum membrane assembly. The sequence is that of ATP-dependent kinase YFH7 (YFH7) from Lachancea thermotolerans (strain ATCC 56472 / CBS 6340 / NRRL Y-8284) (Yeast).